We begin with the raw amino-acid sequence, 110 residues long: Pathogenesis-related protein (110 aa).

Positions 1-19 are cleaved as a signal peptide; it reads AFLLAATLTISSHMQEAGA.

It belongs to the thaumatin family.

The sequence is that of Pathogenesis-related protein from Juniperus virginiana (Eastern redcedar).